We begin with the raw amino-acid sequence, 454 residues long: Protoheme IX farnesyltransferase 1 (454 aa).

The segment at 1-186 is unknown; the sequence is MRTTGFSGLL…AYFELTKPRL (186 aa). 4 helical membrane-spanning segments follow: residues 9–29, 59–79, 87–107, and 113–133; these read LLSA…TAAL, GVAA…WSET, LALA…VATG, and LHLF…AWHL. The tract at residues 137-164 is disordered; that stretch reads TGSDDAPESPPELAPPVDEEPAATEQPA. 9 consecutive transmembrane segments (helical) span residues 186–206, 209–229, 251–271, 276–296, 300–320, 321–341, 377–397, 398–418, and 433–453; these read LMWL…TPTV, VVFT…FNHV, VPVA…LWAF, LLAA…YTLI, NTVQ…LIGY, AAVT…IFLW, HIVF…AVTD, LGWL…WAVV, and FHAS…DSLA. The tract at residues 187 to 451 is protoheme IX prenyltransferase; it reads MWLLCLVAGA…LVLVAILIDS (265 aa).

In the C-terminal section; belongs to the UbiA prenyltransferase family. Protoheme IX farnesyltransferase subfamily.

The protein resides in the cell membrane. The catalysed reaction is heme b + (2E,6E)-farnesyl diphosphate + H2O = Fe(II)-heme o + diphosphate. It participates in porphyrin-containing compound metabolism; heme O biosynthesis; heme O from protoheme: step 1/1. Its function is as follows. Converts heme B (protoheme IX) to heme O by substitution of the vinyl group on carbon 2 of heme B porphyrin ring with a hydroxyethyl farnesyl side group. The sequence is that of Protoheme IX farnesyltransferase 1 (ctaB1) from Natronomonas pharaonis (strain ATCC 35678 / DSM 2160 / CIP 103997 / JCM 8858 / NBRC 14720 / NCIMB 2260 / Gabara) (Halobacterium pharaonis).